Here is a 215-residue protein sequence, read N- to C-terminus: MKNPSVISFLIILLFAATICTHGNEPVKDTAGNPLNTREQYFIQPVKTESKNGGGLVPAAITVLPFCPLGITQTLLPYQPGLPVSFVLALGVGSTVMTSSAVNIEFKSNIWPFCKEFSKFWEVDDSSSAPKEPSILIGGKMGDRNSSFKIEKAGEGARANVYKLTTFYGTVGAIPGVWLSAPQLIITKDTAKTLLVKFKKVDDATTATSNLYFPG.

Positions 1–23 are cleaved as a signal peptide; the sequence is MKNPSVISFLIILLFAATICTHG. Cysteines 67 and 114 form a disulfide. Asparagine 145 carries an N-linked (GlcNAc...) asparagine glycan.

Belongs to the protease inhibitor I3 (leguminous Kunitz-type inhibitor) family. As to quaternary structure, interacts with RD21A. Interacts with RD21B and RD21C. Expressed in vascular bundles of the carpels, the transmitting tract of the style and septum epidermis. Expressed in etiolated seedlings.

It is found in the secreted. The protein resides in the cell wall. The protein localises to the extracellular space. It localises to the apoplast. Its subcellular location is the endoplasmic reticulum. Functionally, water-soluble and chlorophyll-binding protein that probably does not function as a chloroplast chlorophyll carrier and is not involved in photosynthesis. Involved in the control of cell death in the transmitting tract and septum epidermis during flower development. Binds and inhibits the activity of the cysteine protease RD21A as a pro-death protein. May play a role in herbivore resistance activation during seedling greening. The polypeptide is Kunitz trypsin inhibitor 2 (Arabidopsis thaliana (Mouse-ear cress)).